The primary structure comprises 336 residues: Atypical chemokine receptor 1 (336 aa).

Topologically, residues 1–63 (MGNCLHPAEL…CNLLDDSALP (63 aa)) are extracellular. Residues Asn16, Asn27, and Asn33 are each glycosylated (N-linked (GlcNAc...) asparagine). 2 cysteine pairs are disulfide-bonded: Cys51–Cys276 and Cys129–Cys195. The chain crosses the membrane as a helical span at residues 64–84 (FFILVSVLGILASGIVLFMFF). Residues 85–95 (RPLFHWQLCPG) are Cytoplasmic-facing. The helical transmembrane segment at 96-116 (WPVLAQLAVGSALFSIVVPIL) threads the bilayer. At 117 to 129 (APGLGNTRSSALC) the chain is on the extracellular side. A helical transmembrane segment spans residues 130 to 153 (SLGYCVWYGSAFAQALLLGCHASL). The Cytoplasmic segment spans residues 154-166 (GPKLGADQVPGLT). The chain crosses the membrane as a helical span at residues 167 to 187 (LGLSVGLWGVAALLTLPVTLA). Residues 188–207 (SGASGGLCTPVYSMELKALQ) are Extracellular-facing. A helical membrane pass occupies residues 208-228 (ATHAVACLAIFVLLPLGLFGA). The Cytoplasmic portion of the chain corresponds to 229-244 (KGLKKALGMGPGPWMN). Residues 245–265 (ILWAWFIFWWPHGVVLGLDFL) traverse the membrane as a helical segment. Residues 266 to 287 (VRSKLLLLSTCLAQQALDLLLN) lie on the Extracellular side of the membrane. A helical membrane pass occupies residues 288–308 (LAEALAILHCVATPLLLALFC). The Cytoplasmic segment spans residues 309–336 (HQATRTLLPSLPLPEGWSSHLDTLGSKS).

It belongs to the G-protein coupled receptor 1 family. Atypical chemokine receptor subfamily.

Its subcellular location is the early endosome. The protein resides in the recycling endosome. It is found in the membrane. Functionally, atypical chemokine receptor that controls chemokine levels and localization via high-affinity chemokine binding that is uncoupled from classic ligand-driven signal transduction cascades, resulting instead in chemokine sequestration, degradation, or transcytosis. Also known as interceptor (internalizing receptor) or chemokine-scavenging receptor or chemokine decoy receptor. Has a promiscuous chemokine-binding profile, interacting with inflammatory chemokines of both the CXC and the CC subfamilies but not with homeostatic chemokines. Acts as a receptor for chemokines including CCL2, CCL5, CCL7, CCL11, CCL13, CCL14, CCL17, CXCL5, CXCL6, IL8/CXCL8, CXCL11, GRO, RANTES, MCP-1 and TARC. May regulate chemokine bioavailability and, consequently, leukocyte recruitment through two distinct mechanisms: when expressed in endothelial cells, it sustains the abluminal to luminal transcytosis of tissue-derived chemokines and their subsequent presentation to circulating leukocytes; when expressed in erythrocytes, serves as blood reservoir of cognate chemokines but also as a chemokine sink, buffering potential surges in plasma chemokine levels. This chain is Atypical chemokine receptor 1 (ACKR1), found in Papio hamadryas (Hamadryas baboon).